The sequence spans 166 residues: Regulatory protein RecX (166 aa).

Belongs to the RecX family.

The protein localises to the cytoplasm. In terms of biological role, modulates RecA activity. The sequence is that of Regulatory protein RecX from Shigella boydii serotype 18 (strain CDC 3083-94 / BS512).